The following is a 242-amino-acid chain: Eukaryotic translation initiation factor 3 subunit J (242 aa).

Positions 1 to 10 (MASWDDEDFE) are enriched in acidic residues. Disordered stretches follow at residues 1–58 (MASW…KAQR), 71–97 (MKLKPEDASTKRDRQRQAELDSDMMNA), and 201–242 (REEK…DDFM). Low complexity predominate over residues 11–21 (VPAAATPAVPA). A compositionally biased stretch (acidic residues) spans 23–38 (WDDDEEEDVMDSWDAE). A compositionally biased stretch (basic and acidic residues) spans 71-89 (MKLKPEDASTKRDRQRQAE).

This sequence belongs to the eIF-3 subunit J family. Component of the eukaryotic translation initiation factor 3 (eIF-3) complex.

It is found in the cytoplasm. Its function is as follows. Component of the eukaryotic translation initiation factor 3 (eIF-3) complex, which is involved in protein synthesis of a specialized repertoire of mRNAs and, together with other initiation factors, stimulates binding of mRNA and methionyl-tRNAi to the 40S ribosome. The eIF-3 complex specifically targets and initiates translation of a subset of mRNAs involved in cell proliferation. The protein is Eukaryotic translation initiation factor 3 subunit J of Yarrowia lipolytica (strain CLIB 122 / E 150) (Yeast).